Here is a 344-residue protein sequence, read N- to C-terminus: tRNA N6-adenosine threonylcarbamoyltransferase (344 aa).

The Fe cation site is built by His-111 and His-115. Residues 134 to 138 (LVSGG), Asp-167, Gly-180, and Asn-274 contribute to the substrate site. Position 302 (Asp-302) interacts with Fe cation.

This sequence belongs to the KAE1 / TsaD family. The cofactor is Fe(2+).

Its subcellular location is the cytoplasm. The enzyme catalyses L-threonylcarbamoyladenylate + adenosine(37) in tRNA = N(6)-L-threonylcarbamoyladenosine(37) in tRNA + AMP + H(+). Functionally, required for the formation of a threonylcarbamoyl group on adenosine at position 37 (t(6)A37) in tRNAs that read codons beginning with adenine. Is involved in the transfer of the threonylcarbamoyl moiety of threonylcarbamoyl-AMP (TC-AMP) to the N6 group of A37, together with TsaE and TsaB. TsaD likely plays a direct catalytic role in this reaction. The polypeptide is tRNA N6-adenosine threonylcarbamoyltransferase (Dechloromonas aromatica (strain RCB)).